A 215-amino-acid polypeptide reads, in one-letter code: NAD(P)H-hydrate epimerase (215 aa).

The YjeF N-terminal domain occupies Ala-10–Val-211. Asn-58–Asp-62 is a (6S)-NADPHX binding site. Residues Asn-59 and Asp-121 each coordinate K(+). Residues Gly-125–Asp-131 and Asp-154 each bind (6S)-NADPHX. Residue Ser-157 participates in K(+) binding.

Belongs to the NnrE/AIBP family. The cofactor is K(+).

It catalyses the reaction (6R)-NADHX = (6S)-NADHX. It carries out the reaction (6R)-NADPHX = (6S)-NADPHX. In terms of biological role, catalyzes the epimerization of the S- and R-forms of NAD(P)HX, a damaged form of NAD(P)H that is a result of enzymatic or heat-dependent hydration. This is a prerequisite for the S-specific NAD(P)H-hydrate dehydratase to allow the repair of both epimers of NAD(P)HX. This Levilactobacillus brevis (strain ATCC 367 / BCRC 12310 / CIP 105137 / JCM 1170 / LMG 11437 / NCIMB 947 / NCTC 947) (Lactobacillus brevis) protein is NAD(P)H-hydrate epimerase.